A 560-amino-acid polypeptide reads, in one-letter code: Terminal uridylyltransferase Tailor (560 aa).

Residues 169-197 (EQHPKPNPNNQPVQPHPTHQTKQEKKQAQ) are disordered. A compositionally biased stretch (low complexity) spans 176–188 (PNNQPVQPHPTHQ). Residues D278 and D280 each contribute to the Mg(2+) site. One can recognise a PAP-associated domain in the interval 455–522 (LRNFFAYFAK…VVQDPIQLNH (68 aa)).

Mg(2+) serves as cofactor.

The protein localises to the cytoplasm. The catalysed reaction is RNA(n) + UTP = RNA(n)-3'-uridine ribonucleotide + diphosphate. Its function is as follows. Uridylyltransferase which mediates terminal uridylation of miRNAs, leading to their degradation. Has high specificity for splicing-derived miRNAs (mirtrons) and other miRNA substrates containing a 3'-G terminal nucleotide. Appears to be a major suppressor of mirtron biogenesis. This is Terminal uridylyltransferase Tailor from Drosophila melanogaster (Fruit fly).